Consider the following 107-residue polypeptide: SH3 domain-binding glutamic acid-rich-like protein 2 (107 aa).

The SH3-binding motif lies at 61–67; sequence QGNPLPP.

It belongs to the SH3BGR family.

The protein localises to the nucleus. The chain is SH3 domain-binding glutamic acid-rich-like protein 2 (SH3BGRL2) from Pongo abelii (Sumatran orangutan).